A 310-amino-acid polypeptide reads, in one-letter code: Isoflavone reductase homolog A622 (310 aa).

NADP(+) is bound by residues 13–19, Arg-38, and Lys-47; that span reads GGTGYIG. Lys-135 serves as the catalytic Proton acceptor. Residue Arg-139 participates in NADP(+) binding.

The protein belongs to the NmrA-type oxidoreductase family. Isoflavone reductase subfamily. In terms of assembly, monomer. As to expression, expressed in roots and stems.

The protein localises to the cytoplasm. It functions in the pathway alkaloid biosynthesis; nicotine biosynthesis. Functionally, NADPH-binding protein. Involved in the biosynthesis of pyridine alkaloid natural products, leading mainly to the production of anabasine, anatabine, nicotine and nornicotine, effective deterrents against herbivores with antiparasitic and pesticide properties (neurotoxins); nornicotine serves as the precursor in the synthesis of the carcinogen compound N'-nitrosonornicotine (NNN). Reductase involved in a late step of tobacco alkaloid biosynthesis. Triggers either the formation of a nicotinic acid-derived precursor or the final condensation reaction of tobacco alkaloids. The protein is Isoflavone reductase homolog A622 of Nicotiana sylvestris (Wood tobacco).